A 370-amino-acid polypeptide reads, in one-letter code: MGVMIPFRSILNSLKSYEAGKPIELVVREFGIDPNRIIKLGSNENPFGCAESVMEVVRQAISKMSFYPDDSYLDLKTAIASKFDLTTDRIIPGNGSDQVLDFVCRCVLDQGDSVLINRITFAMYKIYALQCGAKIHSTDSVTHDLNAFLDLAKLIRPKIIFLCTPSNPAGDALSKSDVYEFLSKISLDTLVVIDAAYMEFGKKKDPNKFIPAKEVTDLFPNVFYTGTFSKVYGLGGMRIGYGIGNQELISNLYKMRPPFSVTNLSALAATEALKNESYVESYLENNWNEMKRYEKFAAEQSIEFIDSYANFITFFARKRGKSSSEIAHSLLKQGIILRDLKNYDLNALRITIGRPEQNDLVLEALEKEFH.

Lys230 is modified (N6-(pyridoxal phosphate)lysine).

It belongs to the class-II pyridoxal-phosphate-dependent aminotransferase family. Histidinol-phosphate aminotransferase subfamily. As to quaternary structure, homodimer. Pyridoxal 5'-phosphate is required as a cofactor.

It catalyses the reaction L-histidinol phosphate + 2-oxoglutarate = 3-(imidazol-4-yl)-2-oxopropyl phosphate + L-glutamate. Its pathway is amino-acid biosynthesis; L-histidine biosynthesis; L-histidine from 5-phospho-alpha-D-ribose 1-diphosphate: step 7/9. The polypeptide is Histidinol-phosphate aminotransferase (Leptospira interrogans serogroup Icterohaemorrhagiae serovar Lai (strain 56601)).